Here is an 833-residue protein sequence, read N- to C-terminus: Leucine--tRNA ligase (833 aa).

The short motif at 41 to 52 (PYPSGAGLHVGH) is the 'HIGH' region element. Residues 610–614 (KMSKS) carry the 'KMSKS' region motif. K613 is a binding site for ATP.

This sequence belongs to the class-I aminoacyl-tRNA synthetase family.

The protein resides in the cytoplasm. It catalyses the reaction tRNA(Leu) + L-leucine + ATP = L-leucyl-tRNA(Leu) + AMP + diphosphate. The protein is Leucine--tRNA ligase of Streptococcus pneumoniae serotype 4 (strain ATCC BAA-334 / TIGR4).